Reading from the N-terminus, the 355-residue chain is Peptide chain release factor 1 (355 aa).

An N5-methylglutamine modification is found at Q231. Basic and acidic residues predominate over residues 283-292 (IAKETSERKS). The disordered stretch occupies residues 283-303 (IAKETSERKSQVGTGDRSGRI).

It belongs to the prokaryotic/mitochondrial release factor family. Methylated by PrmC. Methylation increases the termination efficiency of RF1.

The protein localises to the cytoplasm. Peptide chain release factor 1 directs the termination of translation in response to the peptide chain termination codons UAG and UAA. The sequence is that of Peptide chain release factor 1 from Campylobacter curvus (strain 525.92).